A 62-amino-acid chain; its full sequence is U8-theraphotoxin-Cg1a 1 (62 aa).

An N-terminal signal peptide occupies residues 1–21; sequence MKTLVLFIIFGLAALFLLSSA. Positions 22-29 are excised as a propeptide; that stretch reads NELEETER. Disulfide bonds link C31–C46, C38–C51, and C45–C58.

Belongs to the neurotoxin 10 (Hwtx-1) family. 30 (Jztx-14) subfamily. Expressed by the venom gland.

It is found in the secreted. Functionally, probable ion channel inhibitor. The chain is U8-theraphotoxin-Cg1a 1 from Chilobrachys guangxiensis (Chinese earth tiger tarantula).